Consider the following 1426-residue polypeptide: DNA-directed RNA polymerase subunit beta' (1426 aa).

Zn(2+)-binding residues include Cys-71, Cys-73, Cys-86, and Cys-89. Mg(2+) is bound by residues Asp-461, Asp-463, and Asp-465. Residues Cys-814, Cys-888, Cys-895, and Cys-898 each coordinate Zn(2+). The disordered stretch occupies residues 1392 to 1426 (ADPIAAAESAIGLGGGEQPATSETGAGGSDPSEEG).

The protein belongs to the RNA polymerase beta' chain family. The RNAP catalytic core consists of 2 alpha, 1 beta, 1 beta' and 1 omega subunit. When a sigma factor is associated with the core the holoenzyme is formed, which can initiate transcription. Requires Mg(2+) as cofactor. It depends on Zn(2+) as a cofactor.

The catalysed reaction is RNA(n) + a ribonucleoside 5'-triphosphate = RNA(n+1) + diphosphate. DNA-dependent RNA polymerase catalyzes the transcription of DNA into RNA using the four ribonucleoside triphosphates as substrates. The protein is DNA-directed RNA polymerase subunit beta' of Alkalilimnicola ehrlichii (strain ATCC BAA-1101 / DSM 17681 / MLHE-1).